A 159-amino-acid chain; its full sequence is UPF0262 protein PHZ_c2197 (159 aa).

Belongs to the UPF0262 family.

The protein is UPF0262 protein PHZ_c2197 of Phenylobacterium zucineum (strain HLK1).